Reading from the N-terminus, the 346-residue chain is Selenocysteine Se-methyltransferase (346 aa).

One can recognise a Hcy-binding domain in the interval 13–330 (SMKELLKETG…TTIRAIHKRL (318 aa)). Zn(2+) contacts are provided by C248, C315, and C316.

Requires Zn(2+) as cofactor. In terms of tissue distribution, expressed in roots, young leaves and florets, but not detected in plants not exposed to selenium.

The enzyme catalyses S-methyl-L-methionine + L-selenocysteine = Se-methyl-L-selenocysteine + L-methionine + H(+). With respect to regulation, inhibited by L-methionine. Its function is as follows. Catalyzes the methylation of DL- and L-selenocysteine with S-methylmethionine as donor. Also methylates DL-homocysteine, DL- and L-cysteine in vitro. May be involved in selenium detoxification. The chain is Selenocysteine Se-methyltransferase (SMT) from Brassica oleracea var. italica (Broccoli).